The following is a 584-amino-acid chain: Levansucrase (584 aa).

The N-terminal stretch at M1 to A30 is a signal peptide. Residue Q31 is modified to Pyrrolidone carboxylic acid. 5 residues coordinate sucrose: W134, D135, S225, R308, and D309. D135 acts as the Nucleophile in catalysis. Cysteines 339 and 395 form a disulfide. E401 functions as the Proton donor/acceptor in the catalytic mechanism.

Belongs to the glycosyl hydrolase 68 family. As to quaternary structure, monomer. In terms of processing, the N-terminus is blocked. The N-terminal Gln is cyclized to a pyroglutamic acid.

It is found in the secreted. It catalyses the reaction [6)-beta-D-fructofuranosyl-(2-&gt;](n) alpha-D-glucopyranoside + sucrose = [6)-beta-D-fructofuranosyl-(2-&gt;](n+1) alpha-D-glucopyranoside + D-glucose. With respect to regulation, strongly inhibited by Hg(2+) and slightly activated by Co(2+). Not inhibited by the metal ion chelator EDTA, suggesting that this enzyme does not need a metal cofactor. In terms of biological role, catalyzes the synthesis of levan, a fructose polymer, by transferring the fructosyl moiety from sucrose to a growing acceptor molecule. Also displays sucrose hydrolase activity. In vitro, catalyzes transfructosylation from sucrose to a variety of acceptors including water (sucrose hydrolysis), glucose (exchange reaction), fructan (polymerase reaction) and sucrose (oligofructoside synthesis). Levansucrase of G.diazotrophicus SRT4, unlike the enzyme of B.subtilis, causes accumulation of large quantities of tri- and tetrasaccharides but small quantities of high-molecular-mass levan. It may act more as a sucrose hydrolase than as a fructan polymerase, and may be the key enzyme in the sucrose metabolism of G.diazotrophicus SRT4. This is Levansucrase from Gluconacetobacter diazotrophicus (Acetobacter diazotrophicus).